Consider the following 194-residue polypeptide: Large ribosomal subunit protein eL15 (194 aa).

Residues S164 to K194 form a disordered region. The span at K167–G176 shows a compositional bias: basic residues. A compositionally biased stretch (basic and acidic residues) spans K177 to K194.

The protein belongs to the eukaryotic ribosomal protein eL15 family.

This chain is Large ribosomal subunit protein eL15 (rpl15e), found in Pyrococcus abyssi (strain GE5 / Orsay).